A 971-amino-acid polypeptide reads, in one-letter code: 116 kDa U5 small nuclear ribonucleoprotein component (971 aa).

Residue Met1 is modified to N-acetylmethionine. The tract at residues 1-52 (MDTDLYDEFGNYIGPELDSDEDDDELGRETKDLDEDEDEDEDDVGEHEDDHP) is disordered. Residues 17–47 (LDSDEDDDELGRETKDLDEDEDEDEDDVGEH) are compositionally biased toward acidic residues. Ser19 carries the phosphoserine modification. Lys63 participates in a covalent cross-link: Glycyl lysine isopeptide (Lys-Gly) (interchain with G-Cter in SUMO1); alternate. Lys63 participates in a covalent cross-link: Glycyl lysine isopeptide (Lys-Gly) (interchain with G-Cter in SUMO2); alternate. Residue Thr85 is modified to Phosphothreonine. The 283-residue stretch at 126–408 (ELIRNVTLCG…GIHLTKEELK (283 aa)) folds into the tr-type G domain. GTP is bound by residues 135 to 142 (GHLHHGKT), 203 to 207 (DTPGH), and 257 to 260 (NKID).

This sequence belongs to the TRAFAC class translation factor GTPase superfamily. Classic translation factor GTPase family. EF-G/EF-2 subfamily. In terms of assembly, component of the U5 snRNP and the U4/U6-U5 tri-snRNP complex, a building block of the spliceosome. The U4/U6-U5 tri-snRNP complex is composed of the U4, U6 and U5 snRNAs and at least PRPF3, PRPF4, PRPF6, PRPF8, PRPF31, SNRNP200, TXNL4A, SNRNP40, DDX23, CD2BP2, PPIH, SNU13, EFTUD2, SART1 and USP39. Component of the pre-catalytic, catalytic and post-catalytic spliceosome complexes. Component of the minor spliceosome, which splices U12-type introns. Within this complex, interacts with CRIPT. Interacts with ERBB4 and PRPF8. Interacts with PIH1D1. Interacts with RPAP3 and URI1 in a ZNHIT2-dependent manner. Interacts with NRDE2. Interacts with FAM50A. Interacts with UBL5.

The protein resides in the nucleus. Its function is as follows. Required for pre-mRNA splicing as component of the spliceosome, including pre-catalytic, catalytic and post-catalytic spliceosomal complexes. Component of the U5 snRNP and the U4/U6-U5 tri-snRNP complex, a building block of the spliceosome. As a component of the minor spliceosome, involved in the splicing of U12-type introns in pre-mRNAs. This is 116 kDa U5 small nuclear ribonucleoprotein component (Eftud2) from Mus musculus (Mouse).